A 132-amino-acid chain; its full sequence is Small ribosomal subunit protein uS8c (132 aa).

The protein belongs to the universal ribosomal protein uS8 family. As to quaternary structure, part of the 30S ribosomal subunit.

Its subcellular location is the plastid. The protein localises to the chloroplast. Its function is as follows. One of the primary rRNA binding proteins, it binds directly to 16S rRNA central domain where it helps coordinate assembly of the platform of the 30S subunit. The protein is Small ribosomal subunit protein uS8c (rps8) of Guillardia theta (Cryptophyte).